The chain runs to 187 residues: GTP cyclohydrolase 1 1 (187 aa).

This sequence belongs to the GTP cyclohydrolase I family. Homomer.

The catalysed reaction is GTP + H2O = 7,8-dihydroneopterin 3'-triphosphate + formate + H(+). Its pathway is cofactor biosynthesis; 7,8-dihydroneopterin triphosphate biosynthesis; 7,8-dihydroneopterin triphosphate from GTP: step 1/1. In Pseudomonas syringae pv. tomato (strain ATCC BAA-871 / DC3000), this protein is GTP cyclohydrolase 1 1.